Consider the following 120-residue polypeptide: Aspartate 1-decarboxylase (120 aa).

Ser-24 serves as the catalytic Schiff-base intermediate with substrate; via pyruvic acid. Pyruvic acid (Ser) is present on Ser-24. A substrate-binding site is contributed by Thr-56. Residue Tyr-57 is the Proton donor of the active site. 70–72 (GAA) contributes to the substrate binding site.

Belongs to the PanD family. Heterooctamer of four alpha and four beta subunits. Pyruvate is required as a cofactor. In terms of processing, is synthesized initially as an inactive proenzyme, which is activated by self-cleavage at a specific serine bond to produce a beta-subunit with a hydroxyl group at its C-terminus and an alpha-subunit with a pyruvoyl group at its N-terminus.

It is found in the cytoplasm. The catalysed reaction is L-aspartate + H(+) = beta-alanine + CO2. It participates in cofactor biosynthesis; (R)-pantothenate biosynthesis; beta-alanine from L-aspartate: step 1/1. Catalyzes the pyruvoyl-dependent decarboxylation of aspartate to produce beta-alanine. The polypeptide is Aspartate 1-decarboxylase (Pyrobaculum islandicum (strain DSM 4184 / JCM 9189 / GEO3)).